The sequence spans 506 residues: CDK5 regulatory subunit-associated protein 3 (506 aa).

3 consecutive short sequence motifs (shuffled ATG8-binding motif) follow at residues 267–270 (IDWG), 292–295 (IDWG), and 310–313 (IDWG). Residues 269 to 506 (WGDFGVEAVS…RPVNLMGTSL (238 aa)) form a required for interaction with UFL1 and mediates interaction with CHEK1 region. The RPL10a-binding domain (RBD) stretch occupies residues 355–370 (DELMELEIFLAQRAVE). Residue Lys450 forms a Glycyl lysine isopeptide (Lys-Gly) (interchain with G-Cter in SUMO2) linkage.

It belongs to the CDK5RAP3 family. Substrate adapter component of the UFM1 ribosome E3 ligase (UREL) complex, composed of UFL1, DDRGK1 and CDK5RAP3. Interaction with UFL1 anchors CDK5RAP3 in the cytoplasm, preventing its translocation to the nucleus which allows expression of the CCND1 cyclin and progression of cells through the G1/S transition. Interacts with ATG8 family proteins MAP1LC3A, MAP1LC3B, GABARAP, GABARAPL1 and GABARAPL2. Interacts with CDK5R1; competes with CDK5RAP1 and CDK5RAP2. Interacts with RELA. Interacts with CHEK1; may negatively regulate CHEK1 and thereby stimulate entry into mitosis. Interacts with CDKN2A/ARF and MDM2; forms a ternary complex involved in regulation of p53/TP53. Interacts with MAPK14. Interacts with CCNB1. Interacts with TUBG1; may regulate CDK5RAP3 in mitotic G2/M transition checkpoint. In terms of assembly, (Microbial infection) Interacts with hepatitis B virus large envelope protein mutant pre-s2; promotes mitotic entry. In terms of processing, may be phosphorylated by CDK5. Post-translationally, ubiquitinated. Probably triggers proteasomal degradation and is negatively regulated by UFL1. May be ufmylated. In terms of processing, cleaved by caspases early during apoptosis, the resulting peptides may play a role in rupture of the nuclear envelope. Ubiquitously expressed. Expressed in heart, brain, placenta, lung, liver, skeletal muscle, kidney and pancreas. Isoform 3 is expressed in kidney, liver, skeletal muscle and placenta.

The protein resides in the endoplasmic reticulum membrane. It localises to the cytoplasm. Its subcellular location is the nucleus. The protein localises to the cytoskeleton. It is found in the microtubule organizing center. The protein resides in the centrosome. In terms of biological role, substrate adapter of E3 ligase complexes mediating ufmylation, the covalent attachment of the ubiquitin-like modifier UFM1 to substrate proteins, and which is involved in various processes, such as ribosome recycling and reticulophagy (also called ER-phagy). As part of the UREL complex, plays a key role in ribosome recycling by promoting mono-ufmylation of RPL26/uL24 subunit of the 60S ribosome. Ufmylation of RPL26/uL24 occurs on free 60S ribosomes following ribosome dissociation: it weakens the junction between post-termination 60S subunits and SEC61 translocons, promoting release and recycling of the large ribosomal subunit from the endoplasmic reticulum membrane. Ufmylation of RPL26/uL24 and subsequent 60S ribosome recycling either take place after normal termination of translation or after ribosome stalling during cotranslational translocation at the endoplasmic reticulum. Within the UREL complex, CDK5RAP3 acts as a substrate adapter that constrains UFL1 ligase activity to mono-ufmylate RPL26/uL24 at 'Lys-134'. The UREL complex is also involved in reticulophagy in response to endoplasmic reticulum stress by promoting ufmylation of proteins such as CYB5R3, thereby promoting lysosomal degradation of ufmylated proteins. Also acts as a regulator of transcription: negatively regulates NF-kappa-B-mediated gene transcription through the control of RELA phosphorylation. Also regulates mitotic G2/M transition checkpoint and mitotic G2 DNA damage checkpoint. Through its interaction with CDKN2A/ARF and MDM2 may induce MDM2-dependent p53/TP53 ubiquitination, stabilization and activation in the nucleus, thereby promoting G1 cell cycle arrest and inhibition of cell proliferation. May also play a role in the rupture of the nuclear envelope during apoptosis. May regulate MAPK14 activity by regulating its dephosphorylation by PPM1D/WIP1. Required for liver development. Functionally, (Microbial infection) May be negatively regulated by hepatitis B virus large envelope protein mutant pre-s2 to promote mitotic entry. The polypeptide is CDK5 regulatory subunit-associated protein 3 (Homo sapiens (Human)).